We begin with the raw amino-acid sequence, 688 residues long: Elongation factor G (688 aa).

One can recognise a tr-type G domain in the interval 6-280 (KLFRNFGIMA…AVVDFLPSPI (275 aa)). GTP-binding positions include 15–22 (AHIDAGKT), 79–83 (DTPGH), and 133–136 (NKMD).

The protein belongs to the TRAFAC class translation factor GTPase superfamily. Classic translation factor GTPase family. EF-G/EF-2 subfamily.

Its subcellular location is the cytoplasm. Its function is as follows. Catalyzes the GTP-dependent ribosomal translocation step during translation elongation. During this step, the ribosome changes from the pre-translocational (PRE) to the post-translocational (POST) state as the newly formed A-site-bound peptidyl-tRNA and P-site-bound deacylated tRNA move to the P and E sites, respectively. Catalyzes the coordinated movement of the two tRNA molecules, the mRNA and conformational changes in the ribosome. The polypeptide is Elongation factor G (Ureaplasma parvum serovar 3 (strain ATCC 27815 / 27 / NCTC 11736)).